The primary structure comprises 139 residues: Large ribosomal subunit protein uL16 (139 aa).

Over residues methionine 1 to arginine 17 the composition is skewed to basic residues. Residues methionine 1–glycine 24 form a disordered region.

Belongs to the universal ribosomal protein uL16 family. Part of the 50S ribosomal subunit.

Binds 23S rRNA and is also seen to make contacts with the A and possibly P site tRNAs. The sequence is that of Large ribosomal subunit protein uL16 from Beutenbergia cavernae (strain ATCC BAA-8 / DSM 12333 / CCUG 43141 / JCM 11478 / NBRC 16432 / NCIMB 13614 / HKI 0122).